A 104-amino-acid polypeptide reads, in one-letter code: Flagellar hook-basal body complex protein FliE (104 aa).

The protein belongs to the FliE family.

It is found in the bacterial flagellum basal body. In Edwardsiella ictaluri (strain 93-146), this protein is Flagellar hook-basal body complex protein FliE.